A 303-amino-acid polypeptide reads, in one-letter code: MDDCGAILHNIETKWLYDFLTLEKCRNFSQAAVSRNVSQPAFSRRIRALEQAIGVELFNRQVTPLQLSEQGKIFHSQIRHLLQQLESNLAELRGGSDYAQRKIKIAAAHSLSLGLLPSIISQMPPLFTWAIEAIDVDEAVDKLREGQSDCIFSFHDEDLLEAPFDHIRLFESQLFPVCASDEHGEALFNLAQPHFPLLNYSRNSYMGRLINRTLTRHSELSFSTFFVSSMSELLKQVALDGCGIAWLPEYAIQQEIRSGKLVVLNRDELVIPIQAYAYRMNTRMNPVAERFWRELRELEIVLS.

Residues 11-68 enclose the HTH lysR-type domain; it reads IETKWLYDFLTLEKCRNFSQAAVSRNVSQPAFSRRIRALEQAIGVELFNRQVTPLQLS. The H-T-H motif DNA-binding region spans 28–47; it reads FSQAAVSRNVSQPAFSRRIR.

Belongs to the LysR transcriptional regulatory family. As to quaternary structure, forms dimers, tetramers and possibly dodecameric complexes; oligomerization may be governed by cellular concentrations. DNA-binding seems to decrease oligomerization.

Its function is as follows. Protects cells from HOCl (hypochlorite) stress but not peroxide or diamide stress. Decreases the intracellular load of reactive oxygen species by up-regulating genes involved in methionine and cysteine biosynthesis and down-regulating Fur-regulated genes involved in iron acquisition. Has also been suggested to down-regulate expression of the flagellar regulon, decreasing motility, but this activity was not confirmed in a second study. This Escherichia coli (strain K12) protein is HTH-type transcriptional regulator YjiE (yjiE).